Reading from the N-terminus, the 1523-residue chain is WD repeat-containing protein 62 (1523 aa).

An N-acetylalanine modification is found at A2. S33 is modified (phosphoserine). Residue T46 is modified to Phosphothreonine. WD repeat units lie at residues 109-150 (TTRK…QVAE), 153-194 (GHKY…VVAS), 196-234 (KVSC…EAKV), 291-330 (INLK…YLTN), 357-396 (AVYP…EVSK), 411-450 (EVYP…DTRW), 490-529 (DMKA…ELIK), 532-574 (AHDA…NLEQ), 578-618 (DHSS…DGLH), 626-665 (AEKT…QKKC), 671-713 (GDEG…KMFG), and 714-752 (HSEI…TTCM). A Phosphoserine modification is found at S501. Residues 762–824 (QEQQQQPKDQ…PSKDSLDPDP (63 aa)) are disordered. A compositionally biased stretch (polar residues) spans 776–790 (PPSQETYASTPSEIR). Residues 797–809 (QTEDEMEEECEPE) are compositionally biased toward acidic residues. One copy of the WD 13 repeat lies at 803-846 (EEECEPEELLKTPSKDSLDPDPRCLLTNGKLPLWAKRLLGDDDV). Residues 810 to 824 (ELLKTPSKDSLDPDP) are compositionally biased toward basic and acidic residues. Residues S966 and S972 each carry the phosphoserine modification. The interval 1000 to 1072 (VSSVSSKDQS…GLGNGSLPQT (73 aa)) is disordered. Phosphothreonine is present on T1072. 3 positions are modified to phosphoserine: S1117, S1143, and S1169. The disordered stretch occupies residues 1143 to 1258 (SPEAQPVGQG…SLHKPLSPGQ (116 aa)). 2 stretches are compositionally biased toward polar residues: residues 1167–1177 (YMSSDGTNVLS) and 1199–1213 (TSVL…ISAP). The segment covering 1214–1225 (SSCSYLESTTSS) has biased composition (low complexity). Over residues 1226–1235 (HAKTTRSISL) the composition is skewed to polar residues. A Phosphoserine modification is found at S1234.

In terms of assembly, can form homodimers (via C-terminus). Interacts (via C-terminus) with MAPKBP1 (via C-terminus). Interacts with CDK5RAP2, CEP152, CEP63 and KIAA0753. CEP63, CDK5RAP2, CEP152, WDR62 are proposed to form a stepwise assembled complex at the centrosome forming a ring near parental centrioles. Prominent in neural crest lineages from 9.5 dpc to 11.5 dpc. Also expressed in the ventricular and subventricular zones during the period of cerebral cortical neurogenesis (11.5-16.5 dpc), with expression decreasing in intensity by 17.5 dpc. In the cerebellum, it is strongly expressed in precursors of granule neurons at late embryonic and early postnatal stages; by postnatal day 9 (P9). Present in fetal brain, enriched within the ventricular and subventricular zone (at protein level).

It localises to the nucleus. The protein resides in the cytoplasm. It is found in the cytoskeleton. The protein localises to the spindle pole. Its subcellular location is the microtubule organizing center. It localises to the centrosome. The protein resides in the centriole. In terms of biological role, required for cerebral cortical development. Plays a role in neuronal proliferation and migration. Plays a role in mother-centriole-dependent centriole duplication; the function seems also to involve CEP152, CDK5RAP2 and CEP63 through a stepwise assembled complex at the centrosome that recruits CDK2 required for centriole duplication. This Mus musculus (Mouse) protein is WD repeat-containing protein 62 (Wdr62).